Consider the following 480-residue polypeptide: Heparin cofactor 2 (480 aa).

Positions 1–19 are cleaved as a signal peptide; the sequence is MQHRPHLLLISLTIMSVCG. Asn-32 is a glycosylation site (N-linked (GlcNAc...) asparagine). 2 consecutive repeat copies span residues 56–66 and 70–80. The interval 56–80 is 2 X 11 AA approximate repeats, Asp/Glu-rich (acidic) (hirudin-like); sequence GEEDDDYLDLEKLLSEDDDYIDIID. Sulfotyrosine occurs at positions 62 and 75. Asn-169 carries N-linked (GlcNAc...) asparagine glycosylation. The tract at residues 173 to 193 is glycosaminoglycan-binding site; the sequence is KYEILTIHNLFRKLTHRLFRR. Residues Asn-368 and Asn-404 are each glycosylated (N-linked (GlcNAc...) asparagine).

This sequence belongs to the serpin family. N-glycosylated; different glycan composition appears to lead to two forms of this protein (56 and 60 kDa).

In terms of biological role, thrombin inhibitor activated by the glycosaminoglycans, heparin or dermatan sulfate. In the presence of the latter, HC-II becomes the predominant thrombin inhibitor in place of antithrombin III (AT). In Oryctolagus cuniculus (Rabbit), this protein is Heparin cofactor 2 (SERPIND1).